Here is a 547-residue protein sequence, read N- to C-terminus: MALPVQAAPQRAQVRRTAQFHPSVWGDYFIKNAPDNKMVSIWKEQAKVLEEEVRRMIISETQKPSGKLKLIDVIQRLGIAYHFEEEIGEVIEQVYSNYDDDEDLYDIALRFRLLRQQGYNVSSDVFDKFKDCKGDFKKHLVNDVQGLLSLHEASYMSVQGEKILDEALEFTKTHLMATQLSSPLPDQVSHALRWPVRRGLPRKEAWQYFSIYQQDREHIEPLLKLAKLDFNIVQKLHHKDMSIITRWWIDLDFTTKLSFARDRVIECSFWALGVFYEPQFVFARQVLSKAVAILSVMDDIYDVHGTIEELELFTEVVERWDISMKDQLPDYMKWYFEALIDFYAEIEAETTKGGRSFCIHYAKEAVKKQVRAYITEARWFNNDYVPTLEEYISNAVISSTYPILITLSFCGMGKFASKDVFDWLFTEPNKLLYTASGLARLIDDIRSHEFEQERGHVASAVECYMKQHSVSKQEAYNELNSIVVNMWKDLNEELLKETGVLPKPILACILNIVRVMDVVYKDEDSYTNSRNSLKDILATFLVNPVPV.

3 residues coordinate Mg(2+): D298, D302, and E451. The DDXXD motif motif lies at 298–302 (DDIYD).

Belongs to the terpene synthase family. The cofactor is Mg(2+).

Functionally, probable sesquiterpene synthase. The polypeptide is Probable terpene synthase 3 (TPS3) (Ricinus communis (Castor bean)).